The sequence spans 273 residues: Non-homologous end joining protein Ku (273 aa).

Residues 10-193 enclose the Ku domain; that stretch reads AFGLVNVPVK…KVEIKPAELK (184 aa). Residues 111–273 are sufficient for interaction with LigD; sequence FLEPDSKSSK…KANSNVPTPP (163 aa).

The protein belongs to the prokaryotic Ku family. In terms of assembly, homodimer. Interacts with LigD.

In terms of biological role, with LigD forms a non-homologous end joining (NHEJ) DNA repair enzyme, which repairs dsDNA breaks with reduced fidelity. Binds linear dsDNA with 5'- and 3'- overhangs but not closed circular dsDNA nor ssDNA. Recruits and stimulates the ligase activity of LigD. This Mycobacterium tuberculosis (strain CDC 1551 / Oshkosh) protein is Non-homologous end joining protein Ku (mku).